The primary structure comprises 269 residues: Cleavage and polyadenylation specificity factor subunit 4 (269 aa).

5 C3H1-type zinc fingers span residues 35-61, 62-89, 90-117, 118-142, and 143-169; these read KSGA…RHIS, GEKT…HEYD, MTKM…HIDP, ESKI…RHRH, and TRRV…HPRF. The tract at residues 173–199 is disordered; it reads MGTTEQPPLPQQTQPPAKQSNNPPLQR. A phosphoserine mark is found at S200, S202, and S212. The segment at 243–260 adopts a CCHC-type zinc-finger fold; it reads VTCYKCGEKGHYANRCTK. S267 carries the phosphoserine modification.

The protein belongs to the CPSF4/YTH1 family. In terms of assembly, component of the cleavage and polyadenylation specificity factor (CPSF) complex, composed of CPSF1, CPSF2, CPSF3, CPSF4 and FIP1L1. Interacts with FIP1L1. As to quaternary structure, (Microbial infection) Interacts with influenza A virus NS1 blocks processing of pre-mRNAs, thereby preventing nuclear export of host cell mRNAs.

It is found in the nucleus. Component of the cleavage and polyadenylation specificity factor (CPSF) complex that play a key role in pre-mRNA 3'-end formation, recognizing the AAUAAA signal sequence and interacting with poly(A) polymerase and other factors to bring about cleavage and poly(A) addition. CPSF4 binds RNA polymers with a preference for poly(U). In Homo sapiens (Human), this protein is Cleavage and polyadenylation specificity factor subunit 4 (CPSF4).